We begin with the raw amino-acid sequence, 146 residues long: 3-hydroxyacyl-[acyl-carrier-protein] dehydratase FabZ (146 aa).

His49 is an active-site residue.

Belongs to the thioester dehydratase family. FabZ subfamily.

The protein localises to the cytoplasm. The catalysed reaction is a (3R)-hydroxyacyl-[ACP] = a (2E)-enoyl-[ACP] + H2O. Functionally, involved in unsaturated fatty acids biosynthesis. Catalyzes the dehydration of short chain beta-hydroxyacyl-ACPs and long chain saturated and unsaturated beta-hydroxyacyl-ACPs. The chain is 3-hydroxyacyl-[acyl-carrier-protein] dehydratase FabZ from Pseudomonas savastanoi pv. phaseolicola (strain 1448A / Race 6) (Pseudomonas syringae pv. phaseolicola (strain 1448A / Race 6)).